Here is a 263-residue protein sequence, read N- to C-terminus: Indole-3-glycerol phosphate synthase (263 aa).

Belongs to the TrpC family.

The catalysed reaction is 1-(2-carboxyphenylamino)-1-deoxy-D-ribulose 5-phosphate + H(+) = (1S,2R)-1-C-(indol-3-yl)glycerol 3-phosphate + CO2 + H2O. It functions in the pathway amino-acid biosynthesis; L-tryptophan biosynthesis; L-tryptophan from chorismate: step 4/5. This is Indole-3-glycerol phosphate synthase from Aliarcobacter butzleri (strain RM4018) (Arcobacter butzleri).